The sequence spans 440 residues: Thymidine phosphorylase (440 aa).

It belongs to the thymidine/pyrimidine-nucleoside phosphorylase family. In terms of assembly, homodimer.

The enzyme catalyses thymidine + phosphate = 2-deoxy-alpha-D-ribose 1-phosphate + thymine. It functions in the pathway pyrimidine metabolism; dTMP biosynthesis via salvage pathway; dTMP from thymine: step 1/2. In terms of biological role, the enzymes which catalyze the reversible phosphorolysis of pyrimidine nucleosides are involved in the degradation of these compounds and in their utilization as carbon and energy sources, or in the rescue of pyrimidine bases for nucleotide synthesis. This chain is Thymidine phosphorylase, found in Klebsiella pneumoniae (strain 342).